A 159-amino-acid polypeptide reads, in one-letter code: Type-1 angiotensin II receptor-associated protein (159 aa).

Residues methionine 1 to cysteine 23 lie on the Extracellular side of the membrane. A helical membrane pass occupies residues isoleucine 24–alanine 44. The Cytoplasmic segment spans residues valine 45 to serine 55. A helical membrane pass occupies residues methionine 56 to tyrosine 76. Over proline 77 to arginine 86 the chain is Extracellular. Residues phenylalanine 87–tyrosine 107 form a helical membrane-spanning segment. Topologically, residues histidine 108–tyrosine 159 are cytoplasmic. Residues tyrosine 110–glycine 122 form an interaction with AGTR1 region. 2 positions are modified to phosphoserine: serine 126 and serine 127. The residue at position 135 (threonine 135) is a Phosphothreonine. Serine 138 and serine 153 each carry phosphoserine. Residues glutamate 140–tyrosine 159 form a disordered region.

In terms of assembly, interacts with RACK1, and with the C-terminal region of AGTR1. Ubiquitous but more abundant in kidney, heart, pancreas and thyroid.

It localises to the endoplasmic reticulum membrane. Its subcellular location is the golgi apparatus membrane. It is found in the cytoplasmic vesicle membrane. Functionally, appears to be a negative regulator of type-1 angiotensin II receptor-mediated signaling by regulating receptor internalization as well as mechanism of receptor desensitization such as phosphorylation. Also induces a decrease in cell proliferation and angiotensin II-stimulated transcriptional activity. This is Type-1 angiotensin II receptor-associated protein (AGTRAP) from Homo sapiens (Human).